The following is a 360-amino-acid chain: MTATLERRSSQGLWDRFADWVTSTNNRFYVGWFGVLMIPTLLSATICFVVAFVAAPPVDMDGIREPISGSLLYGNNIITGAVIPSSNAIGLHFYPIWEAASMDEWLYNGGPYQLVVFHFLIGVFCYLGREWELSYRLGLRPWICIAYSAPVAAAAAVFLIYPIGQGSFSDGMPLGISGTFNFMFVFQAEHNILNHPFHMLGVAGVFGGSLFSAMHGSLVTSSLIRETSMEESQNYGYKFGQEEETYNIIAAHGYFGRLIFQYASFNNSRSLHFFLAAWPVIGIWFTALGISVMAFNLNGFNFNSSIVDSQGRAIYTWADIVNRANLGMEVMHERNAHNFPLDLAGTESAPVAVGNADLNG.

3 helical membrane passes run 29–46 (YVGW…SATI), 118–133 (HFLI…EWEL), and 142–156 (WICI…AAAA). Residue histidine 118 coordinates chlorophyll a. Residue tyrosine 126 participates in pheophytin a binding. Aspartate 170 and glutamate 189 together coordinate [CaMn4O5] cluster. Residues 197–218 (FHMLGVAGVFGGSLFSAMHGSL) form a helical membrane-spanning segment. Residue histidine 198 participates in chlorophyll a binding. A quinone-binding positions include histidine 215 and 264–265 (SF). A Fe cation-binding site is contributed by histidine 215. Residue histidine 272 participates in Fe cation binding. Residues 274–288 (FLAAWPVIGIWFTAL) traverse the membrane as a helical segment. [CaMn4O5] cluster contacts are provided by histidine 332, glutamate 333, aspartate 342, and alanine 344. A propeptide spanning residues 345 to 360 (GTESAPVAVGNADLNG) is cleaved from the precursor.

It belongs to the reaction center PufL/M/PsbA/D family. As to quaternary structure, PSII is composed of 1 copy each of membrane proteins PsbA, PsbB, PsbC, PsbD, PsbE, PsbF, PsbH, PsbI, PsbJ, PsbK, PsbL, PsbM, PsbT, PsbX, Psb30/Ycf12, peripheral proteins PsbO, CyanoQ (PsbQ), PsbU, PsbV and a large number of cofactors. It forms dimeric complexes. Requires The D1/D2 heterodimer binds P680, chlorophylls that are the primary electron donor of PSII, and subsequent electron acceptors. It shares a non-heme iron and each subunit binds pheophytin, quinone, additional chlorophylls, carotenoids and lipids. D1 provides most of the ligands for the Mn4-Ca-O5 cluster of the oxygen-evolving complex (OEC). There is also a Cl(-1) ion associated with D1 and D2, which is required for oxygen evolution. The PSII complex binds additional chlorophylls, carotenoids and specific lipids. as cofactor. In terms of processing, tyr-161 forms a radical intermediate that is referred to as redox-active TyrZ, YZ or Y-Z. Post-translationally, C-terminally processed by CtpA; processing is essential to allow assembly of the oxygen-evolving complex and thus photosynthetic growth.

Its subcellular location is the cell inner membrane. The catalysed reaction is 2 a plastoquinone + 4 hnu + 2 H2O = 2 a plastoquinol + O2. Its function is as follows. Photosystem II (PSII) is a light-driven water:plastoquinone oxidoreductase that uses light energy to abstract electrons from H(2)O, generating O(2) and a proton gradient subsequently used for ATP formation. It consists of a core antenna complex that captures photons, and an electron transfer chain that converts photonic excitation into a charge separation. The D1/D2 (PsbA/PsbD) reaction center heterodimer binds P680, the primary electron donor of PSII as well as several subsequent electron acceptors. This Gloeobacter violaceus (strain ATCC 29082 / PCC 7421) protein is Photosystem II protein D1 1.